The primary structure comprises 158 residues: Methylglyoxal synthase (158 aa).

The MGS-like domain occupies 1-158 (MRRKLRIALV…AFEESLKVKE (158 aa)). Residues His12, Lys16, 38 to 41 (TGTT), and 63 to 64 (SG) each bind substrate. The active-site Proton donor/acceptor is the Asp69. His96 is a substrate binding site.

The protein belongs to the methylglyoxal synthase family.

The catalysed reaction is dihydroxyacetone phosphate = methylglyoxal + phosphate. Catalyzes the formation of methylglyoxal from dihydroxyacetone phosphate. In Treponema socranskii, this protein is Methylglyoxal synthase.